Reading from the N-terminus, the 698-residue chain is Elongation factor G (698 aa).

In terms of domain architecture, tr-type G spans 10 to 285; that stretch reads ASTRNIGIMA…AVVDFLPNPL (276 aa). Residues 19-26, 83-87, and 137-140 contribute to the GTP site; these read AHIDAGKT, DTPGH, and NKMD.

This sequence belongs to the TRAFAC class translation factor GTPase superfamily. Classic translation factor GTPase family. EF-G/EF-2 subfamily.

The protein localises to the cytoplasm. Functionally, catalyzes the GTP-dependent ribosomal translocation step during translation elongation. During this step, the ribosome changes from the pre-translocational (PRE) to the post-translocational (POST) state as the newly formed A-site-bound peptidyl-tRNA and P-site-bound deacylated tRNA move to the P and E sites, respectively. Catalyzes the coordinated movement of the two tRNA molecules, the mRNA and conformational changes in the ribosome. The sequence is that of Elongation factor G from Frankia alni (strain DSM 45986 / CECT 9034 / ACN14a).